The following is a 555-amino-acid chain: Formate--tetrahydrofolate ligase (555 aa).

65–72 (TPAGEGKS) is an ATP binding site.

The protein belongs to the formate--tetrahydrofolate ligase family.

The enzyme catalyses (6S)-5,6,7,8-tetrahydrofolate + formate + ATP = (6R)-10-formyltetrahydrofolate + ADP + phosphate. Its pathway is one-carbon metabolism; tetrahydrofolate interconversion. This is Formate--tetrahydrofolate ligase from Staphylococcus aureus (strain COL).